The sequence spans 460 residues: MTKLWGGRFQKETDRLVEDFHSSISFDRRLYKYDIRGSIAHARMLGKAGIIPPEEARAIADGLQEVLADIEAGRAGFSVEAEDIHMNVEQLLTAKVGEVGKKLHTARSRNDQVALDIRMYLKDEIDQITGLLRELQAALLDLAEKHTGTVMPGYTHLQRAQPVTLAHHLLAYCQMFRRDEERLADCRRRTDVMPLGAGALAGTTFPLDREYVAEQLGFAAVAENSLDAVSDRDFAVEFAAAASLIMVHLSRFCEEIVLWSSAEFAFIELDDAYSTGSSMMPQKKNPDVAELIRGKCGRVFGDLQALLTMLKGLPLAYNKDLQEDKEALFDAVDTVKKCLLVFKPMLETMQVKKERMAEAARGGFTNATDLADYLVRKGLPFRQAHEAVGKAVLYCLERGRSLDRLSLDELRQFSPLVEEDVYEAIDISRCVEARRVTGGPAPGAVLEAVKKARQRLRERP.

It belongs to the lyase 1 family. Argininosuccinate lyase subfamily.

The protein localises to the cytoplasm. It carries out the reaction 2-(N(omega)-L-arginino)succinate = fumarate + L-arginine. It functions in the pathway amino-acid biosynthesis; L-arginine biosynthesis; L-arginine from L-ornithine and carbamoyl phosphate: step 3/3. The polypeptide is Argininosuccinate lyase (Pelotomaculum thermopropionicum (strain DSM 13744 / JCM 10971 / SI)).